Reading from the N-terminus, the 255-residue chain is tRNA pseudouridine synthase A (255 aa).

The active-site Nucleophile is Asp52. Tyr111 is a binding site for substrate.

Belongs to the tRNA pseudouridine synthase TruA family. Homodimer.

It carries out the reaction uridine(38/39/40) in tRNA = pseudouridine(38/39/40) in tRNA. Functionally, formation of pseudouridine at positions 38, 39 and 40 in the anticodon stem and loop of transfer RNAs. The protein is tRNA pseudouridine synthase A of Nitrobacter winogradskyi (strain ATCC 25391 / DSM 10237 / CIP 104748 / NCIMB 11846 / Nb-255).